Here is a 128-residue protein sequence, read N- to C-terminus: uncharacterized protein (128 aa).

Disordered regions lie at residues 62–83 (LNPS…SPRV) and 101–128 (FAAS…RYQP). A compositionally biased stretch (low complexity) spans 101-114 (FAASSSSTAPVTVT).

It localises to the cytoplasm. It is found in the nucleus. This is an uncharacterized protein from Saccharomyces cerevisiae (strain ATCC 204508 / S288c) (Baker's yeast).